A 316-amino-acid polypeptide reads, in one-letter code: Adenine deaminase (316 aa).

Residues histidine 14, histidine 16, and histidine 194 each coordinate Zn(2+). Glutamate 197 acts as the Proton donor in catalysis. Aspartate 275 provides a ligand contact to Zn(2+). A substrate-binding site is contributed by aspartate 276.

The protein belongs to the metallo-dependent hydrolases superfamily. Adenosine and AMP deaminases family. Adenine deaminase type 2 subfamily. Zn(2+) is required as a cofactor.

The catalysed reaction is adenine + H2O + H(+) = hypoxanthine + NH4(+). In terms of biological role, catalyzes the hydrolytic deamination of adenine to hypoxanthine. Plays an important role in the purine salvage pathway and in nitrogen catabolism. In Bordetella avium (strain 197N), this protein is Adenine deaminase.